A 301-amino-acid polypeptide reads, in one-letter code: Sulfate adenylyltransferase subunit 2 (301 aa).

It belongs to the PAPS reductase family. CysD subfamily. As to quaternary structure, heterodimer composed of CysD, the smaller subunit, and CysN.

The catalysed reaction is sulfate + ATP + H(+) = adenosine 5'-phosphosulfate + diphosphate. The protein operates within sulfur metabolism; hydrogen sulfide biosynthesis; sulfite from sulfate: step 1/3. In terms of biological role, with CysN forms the ATP sulfurylase (ATPS) that catalyzes the adenylation of sulfate producing adenosine 5'-phosphosulfate (APS) and diphosphate, the first enzymatic step in sulfur assimilation pathway. APS synthesis involves the formation of a high-energy phosphoric-sulfuric acid anhydride bond driven by GTP hydrolysis by CysN coupled to ATP hydrolysis by CysD. This Geotalea daltonii (strain DSM 22248 / JCM 15807 / FRC-32) (Geobacter daltonii) protein is Sulfate adenylyltransferase subunit 2.